The chain runs to 271 residues: Cobalt import ATP-binding protein CbiO (271 aa).

Positions 2-236 constitute an ABC transporter domain; the sequence is LATSDLWFRY…TEAMEHAGLT (235 aa). 34-41 provides a ligand contact to ATP; that stretch reads GANGCGKS.

It belongs to the ABC transporter superfamily. Cobalt importer (TC 3.A.1.18.1) family. In terms of assembly, forms an energy-coupling factor (ECF) transporter complex composed of an ATP-binding protein (A component, CbiO), a transmembrane protein (T component, CbiQ) and 2 possible substrate-capture proteins (S components, CbiM and CbiN) of unknown stoichimetry.

The protein resides in the cell inner membrane. It participates in cofactor biosynthesis; adenosylcobalamin biosynthesis. Functionally, part of the energy-coupling factor (ECF) transporter complex CbiMNOQ involved in cobalt import. Presumably responsible for energy coupling to the transport system. The chain is Cobalt import ATP-binding protein CbiO from Salmonella paratyphi A (strain ATCC 9150 / SARB42).